The sequence spans 491 residues: Ketol-acid reductoisomerase (NADP(+)) (491 aa).

Positions 15–208 (AQLGTCRFME…GGHRAGVLES (194 aa)) constitute a KARI N-terminal Rossmann domain. NADP(+) contacts are provided by residues 45–48 (CGAQ), Arg-68, Arg-76, Ser-78, and 108–110 (DKQ). The active site involves His-132. Gly-158 serves as a coordination point for NADP(+). KARI C-terminal knotted domains follow at residues 209–353 (SFVA…KEQE) and 354–486 (YFDK…MTAM). Mg(2+) is bound by residues Asp-217, Glu-221, Glu-389, and Glu-393. Ser-414 lines the substrate pocket.

It belongs to the ketol-acid reductoisomerase family. Mg(2+) is required as a cofactor.

It carries out the reaction (2R)-2,3-dihydroxy-3-methylbutanoate + NADP(+) = (2S)-2-acetolactate + NADPH + H(+). It catalyses the reaction (2R,3R)-2,3-dihydroxy-3-methylpentanoate + NADP(+) = (S)-2-ethyl-2-hydroxy-3-oxobutanoate + NADPH + H(+). Its pathway is amino-acid biosynthesis; L-isoleucine biosynthesis; L-isoleucine from 2-oxobutanoate: step 2/4. It functions in the pathway amino-acid biosynthesis; L-valine biosynthesis; L-valine from pyruvate: step 2/4. Functionally, involved in the biosynthesis of branched-chain amino acids (BCAA). Catalyzes an alkyl-migration followed by a ketol-acid reduction of (S)-2-acetolactate (S2AL) to yield (R)-2,3-dihydroxy-isovalerate. In the isomerase reaction, S2AL is rearranged via a Mg-dependent methyl migration to produce 3-hydroxy-3-methyl-2-ketobutyrate (HMKB). In the reductase reaction, this 2-ketoacid undergoes a metal-dependent reduction by NADPH to yield (R)-2,3-dihydroxy-isovalerate. This Christiangramia forsetii (strain DSM 17595 / CGMCC 1.15422 / KT0803) (Gramella forsetii) protein is Ketol-acid reductoisomerase (NADP(+)).